We begin with the raw amino-acid sequence, 238 residues long: Ribonuclease PH (238 aa).

Phosphate-binding positions include R86 and 124–126 (GTR).

Belongs to the RNase PH family. Homohexameric ring arranged as a trimer of dimers.

The catalysed reaction is tRNA(n+1) + phosphate = tRNA(n) + a ribonucleoside 5'-diphosphate. Phosphorolytic 3'-5' exoribonuclease that plays an important role in tRNA 3'-end maturation. Removes nucleotide residues following the 3'-CCA terminus of tRNAs; can also add nucleotides to the ends of RNA molecules by using nucleoside diphosphates as substrates, but this may not be physiologically important. Probably plays a role in initiation of 16S rRNA degradation (leading to ribosome degradation) during starvation. The protein is Ribonuclease PH of Mesorhizobium japonicum (strain LMG 29417 / CECT 9101 / MAFF 303099) (Mesorhizobium loti (strain MAFF 303099)).